Consider the following 185-residue polypeptide: Prenylated Rab acceptor protein 1 (185 aa).

Residues 1–78 (MAAQKDQQKD…RNVEYYQSNY (78 aa)) are Cytoplasmic-facing. The tract at residues 30–54 (AGREWLERRRATIRPWGSFVDQRRF) is required for interaction with prenylated RAB3A and VAMP2. A run of 2 helical transmembrane segments spans residues 79-94 (VFVF…VTSP) and 95-112 (MLLV…ILYL). Topologically, residues 113–131 (RTLQSKFVLFGREVSPAHQ) are cytoplasmic. Transmembrane regions (helical) follow at residues 132-148 (YALA…LAGA) and 149-165 (GSAV…VIGS). Residues 165–185 (SHAAFHQIEAVDGEELQMEPV) are required for interaction with GDI1. At 166–185 (HAAFHQIEAVDGEELQMEPV) the chain is on the cytoplasmic side. Residues 175-185 (VDGEELQMEPV) are required for interaction with prenylated RAB3A and VAMP2. Residues 175-185 (VDGEELQMEPV) form a homodimerization region.

This sequence belongs to the PRA1 family. Homodimer. Interacts with VAMP2 (synaptobrevin-2), prenylated Rab proteins, GDI1, NRDG1 and PCLO.

It localises to the cell membrane. The protein resides in the cytoplasm. The protein localises to the golgi apparatus. It is found in the cytoplasmic vesicle. Its subcellular location is the secretory vesicle. It localises to the synaptic vesicle. In terms of biological role, general Rab protein regulator required for vesicle formation from the Golgi complex. May control vesicle docking and fusion by mediating the action of Rab GTPases to the SNARE complexes. In addition it inhibits the removal of Rab GTPases from the membrane by GDI1. The sequence is that of Prenylated Rab acceptor protein 1 (RABAC1) from Sus scrofa (Pig).